Reading from the N-terminus, the 818-residue chain is Auxin response factor 12 (818 aa).

Residues 1–10 show a composition bias toward low complexity; it reads MSSSSAASIG. Residues 1–24 form a disordered region; that stretch reads MSSSSAASIGPPQPPPPPAPPEEE. Over residues 11-20 the composition is skewed to pro residues; the sequence is PPQPPPPPAP. The TF-B3 DNA-binding region spans 135-237; sequence FCKTLTASDT…QLLLGIRRAS (103 aa). Disordered stretches follow at residues 526–565 and 629–648; these read NDQKQKIQPDQSYQVPTSAVLPSPTSLPSHLREKFGFSDP and GSVLHNSPTSKDGSVENKIG. The span at 629–640 shows a compositional bias: polar residues; it reads GSVLHNSPTSKD. A PB1 domain is found at 719 to 803; sequence RTFVKVYKSG…WYIKILSPED (85 aa).

This sequence belongs to the ARF family. Homodimers and heterodimers. Expressed in roots, culms, leaves and young panicles.

It localises to the nucleus. In terms of biological role, auxin response factors (ARFs) are transcriptional factors that bind specifically to the DNA sequence 5'-TGTCTC-3' found in the auxin-responsive promoter elements (AuxREs). The protein is Auxin response factor 12 (ARF12) of Oryza sativa subsp. japonica (Rice).